The primary structure comprises 408 residues: Hepatocyte nuclear factor 4-gamma (408 aa).

Positions N9–N84 form a DNA-binding region, nuclear receptor. 2 NR C4-type zinc fingers span residues C12 to C32 and C48 to C72. S94 bears the Phosphoserine mark. Positions S99 to G328 constitute an NR LBD domain. The segment at A369–L408 is disordered. 2 positions are modified to phosphothreonine: T370 and T373. S377 bears the Phosphoserine mark. The segment covering T390–L408 has biased composition (polar residues).

The protein belongs to the nuclear hormone receptor family. NR2 subfamily.

The protein localises to the nucleus. In terms of biological role, transcription factor. Has a lower transcription activation potential than HNF4-alpha. In Mus musculus (Mouse), this protein is Hepatocyte nuclear factor 4-gamma (Hnf4g).